We begin with the raw amino-acid sequence, 224 residues long: Thylakoid lumenal 15 kDa protein 1, chloroplastic (224 aa).

The transit peptide at 1–34 directs the protein to the chloroplast; that stretch reads MVILSNVSLFSCCNISQKPSLFSPSSRSSHCPIR. The transit peptide at 35 to 81 directs the protein to the thylakoid; that stretch reads CSQSQEGKEVVTSPLRSVVWSLGEEVSKRSLFALVSASLFFVDPALA. 2 Pentapeptide repeat domains span residues 116 to 155 and 156 to 196; these read SILR…DFSL and ANVT…PLRD.

The protein resides in the plastid. It localises to the chloroplast thylakoid lumen. This chain is Thylakoid lumenal 15 kDa protein 1, chloroplastic, found in Arabidopsis thaliana (Mouse-ear cress).